We begin with the raw amino-acid sequence, 64 residues long: Cytochrome c oxidase subunit 5C (64 aa).

The chain crosses the membrane as a helical span at residues 16 to 34; that stretch reads VVKELVIGFSLGLVAGGFW.

Belongs to the cytochrome c oxidase subunit 5C family. In terms of assembly, sweet potato cytochrome C oxidase consists of at least seven different polypeptides species, subunits I, II, III, IV, Va, Vb, and Vc in order of MW.

It is found in the mitochondrion inner membrane. This protein is one of the nuclear-coded polypeptide chains of cytochrome c oxidase, the terminal oxidase in mitochondrial electron transport. This chain is Cytochrome c oxidase subunit 5C (COX5C), found in Ipomoea batatas (Sweet potato).